The primary structure comprises 284 residues: Proteasome subunit pbs-5 (284 aa).

Positions 1 to 64 are cleaved as a propeptide — removed in mature form; it reads MWGETFDDFE…AGKSMQFRKG (64 aa). The active-site Nucleophile is T65.

It belongs to the peptidase T1B family. As to quaternary structure, the 26S proteasome consists of a 20S proteasome core and two 19S regulatory subunits. The 20S proteasome core is composed of 28 subunits that are arranged in four stacked rings, resulting in a barrel-shaped structure. The two end rings are each formed by seven alpha subunits, and the two central rings are each formed by seven beta subunits. The catalytic chamber with the active sites is on the inside of the barrel.

The protein localises to the cytoplasm. Its subcellular location is the nucleus. The enzyme catalyses Cleavage of peptide bonds with very broad specificity.. Component of the 20S core proteasome complex involved in the proteolytic degradation of most intracellular proteins. This complex plays numerous essential roles within the cell by associating with different regulatory particles. Associated with two 19S regulatory particles, forms the 26S proteasome and thus participates in the ATP-dependent degradation of ubiquitinated proteins. The 26S proteasome plays a key role in the maintenance of protein homeostasis by removing misfolded or damaged proteins that could impair cellular functions, and by removing proteins whose functions are no longer required. This chain is Proteasome subunit pbs-5, found in Caenorhabditis elegans.